The primary structure comprises 88 residues: Large ribosomal subunit protein uL23c (88 aa).

The protein belongs to the universal ribosomal protein uL23 family. Part of the 50S ribosomal subunit.

Its subcellular location is the plastid. It localises to the chloroplast. Functionally, binds to 23S rRNA. The sequence is that of Large ribosomal subunit protein uL23c (rpl23) from Spirogyra maxima (Green alga).